The sequence spans 439 residues: Dihydroorotase (439 aa).

Positions 65 and 67 each coordinate Zn(2+). Residues 67 to 69 (HFR) and Asn-99 each bind substrate. The Zn(2+) site is built by Asp-156, His-183, His-246, and Asp-321. The active site involves Asp-321. Substrate contacts are provided by residues His-325 and 339–340 (FG).

The protein belongs to the metallo-dependent hydrolases superfamily. DHOase family. Class I DHOase subfamily. It depends on Zn(2+) as a cofactor.

The enzyme catalyses (S)-dihydroorotate + H2O = N-carbamoyl-L-aspartate + H(+). Its pathway is pyrimidine metabolism; UMP biosynthesis via de novo pathway; (S)-dihydroorotate from bicarbonate: step 3/3. Functionally, catalyzes the reversible cyclization of carbamoyl aspartate to dihydroorotate. The chain is Dihydroorotase from Chlorobaculum tepidum (strain ATCC 49652 / DSM 12025 / NBRC 103806 / TLS) (Chlorobium tepidum).